The primary structure comprises 173 residues: Lectin BRA-2 (173 aa).

N-linked (GlcNAc...) asparagine glycosylation is present at Asn39. Disulfide bonds link Cys47-Cys61, Cys78-Cys168, and Cys144-Cys160. Residues 51-170 form the C-type lectin domain; it reads PNGWVTSENK…NDRYNFVCEI (120 aa).

Homohexamer; disulfide-linked. As to expression, coelemic fluid.

In terms of biological role, sugar-binding protein which recognizes specific carbohydrate structures and agglutinates a variety of animal cells by binding to cell-surface glycoproteins and glycolipids. Calcium-dependent lectin. Invertebrate lectins may be involved in defense functions. This chain is Lectin BRA-2, found in Megabalanus rosa (Acorn barnacle).